Reading from the N-terminus, the 71-residue chain is Equinin B (71 aa).

A signal peptide spans 1–11 (MAVIMVDQAEG). A propeptide spanning residues 46–71 (GDEPQQMALDDESDPLVILPNNYNDY) is cleaved from the precursor.

In terms of processing, contains 4 disulfide bonds.

It is found in the secreted. The protein localises to the target cell membrane. Functionally, antimicrobial peptide with inhibitory activity against both Gram-positive and Gram-negative bacteria (E.coli (MIC=0.25 ug/ml), M.lysodeikticus (MIC=0.25 ug/ml), and V.alginolyticus (MIC=0.25 ug/ml)). Does not show hemolytic activity. In Actinia equina (Beadlet anemone), this protein is Equinin B.